The primary structure comprises 105 residues: Integration host factor subunit beta (105 aa).

It belongs to the bacterial histone-like protein family. As to quaternary structure, heterodimer of an alpha and a beta chain.

This protein is one of the two subunits of integration host factor, a specific DNA-binding protein that functions in genetic recombination as well as in transcriptional and translational control. The protein is Integration host factor subunit beta of Nitrosomonas eutropha (strain DSM 101675 / C91 / Nm57).